The chain runs to 404 residues: cAMP-dependent protein kinase regulatory subunit (404 aa).

A dimerization and phosphorylation region spans residues 14–144; that stretch reads LTDHELLRIP…RLKTAIAGNF (131 aa). S105 is modified (phosphoserine). Residues 145 to 276, E223, R232, 277 to 398, E344, and R353 each bind 3',5'-cyclic AMP; these read LFSH…EKFP and CCRH…GVEE.

Belongs to the cAMP-dependent kinase regulatory chain family. As to quaternary structure, tetramer, composed of 2 regulatory (R) and 2 catalytic (C) subunits. In the presence of cAMP it dissociates into 2 active monomeric C subunits and an R dimer.

Functionally, cAMP-dependent protein kinase PKA regulatory subunit. This is cAMP-dependent protein kinase regulatory subunit (PKAR) from Colletotrichum trifolii.